Consider the following 92-residue polypeptide: Larval cuticle protein 9 (92 aa).

The signal sequence occupies residues 1 to 16 (MKFVIVLACLLAVVFA). One can recognise a Chitin-binding type R&amp;R domain in the interval 31 to 92 (LLDFNYAYEL…TGYHPKVVEA (62 aa)).

Its function is as follows. Component of the cuticle of the larva. The chain is Larval cuticle protein 9 (Lcp9) from Drosophila melanogaster (Fruit fly).